Here is a 436-residue protein sequence, read N- to C-terminus: MAENNSKNVDVRPKTSRSRSADRKDGYVWSGKKLSWSKKSESCSESEAIGTVENVEIPLRSQERQLSCSSIELDLDHSCGHRFLGRSLKQKLQDAVGQCFPIKNCSGRHSPGLPSKRKIHISELMLDKCPFPPRSDLAFRWHFIKRHTVPMSPNSDEWVSADLSERKLRDAQLKRRNTEDDIPCFSHTNGQPCVITANSASCTGGHITGSMMNLVTNNSIEDSDMDSEDEIITLCTSSRKRNKPRWEMEEEILQLEAPPKFHTQIDYVHCLVPDLLQISNNPCYWGVMDKYAAEALLEGKPEGTFLLRDSAQEDYLFSVSFRRYSRSLHARIEQWNHNFSFDAHDPCVFHSPDITGLLEHYKDPSACMFFEPLLSTPLIRTFPFSLQHICRTVICNCTTYDGIDALPIPSPMKLYLKEYHYKSKVRLLRIDVPEQQ.

A disordered region spans residues 1 to 25 (MAENNSKNVDVRPKTSRSRSADRKD). The segment covering 9–25 (VDVRPKTSRSRSADRKD) has biased composition (basic and acidic residues). The region spanning 283-378 (CYWGVMDKYA…FFEPLLSTPL (96 aa)) is the SH2 domain. In terms of domain architecture, SOCS box spans 373-422 (LLSTPLIRTFPFSLQHICRTVICNCTTYDGIDALPIPSPMKLYLKEYHYK).

Its pathway is protein modification; protein ubiquitination. Its function is as follows. SOCS family proteins form part of a classical negative feedback system that regulates cytokine signal transduction. Substrate-recognition component of a SCF-like ECS (Elongin BC-CUL2/5-SOCS-box protein) E3 ubiquitin-protein ligase complex which mediates the ubiquitination and subsequent proteasomal degradation of target proteins. Inhibits EGF signaling by mediating the degradation of the Tyr-phosphorylated EGF receptor/EGFR. The sequence is that of Suppressor of cytokine signaling 4 (Socs4) from Mus musculus (Mouse).